A 636-amino-acid polypeptide reads, in one-letter code: Probable potassium transport system protein Kup (636 aa).

A run of 12 helical transmembrane segments spans residues methionine 22 to tyrosine 42, isoleucine 64 to isoleucine 84, alanine 114 to threonine 134, phenylalanine 150 to leucine 170, leucine 182 to isoleucine 202, phenylalanine 220 to threonine 240, tryptophan 261 to leucine 281, leucine 293 to isoleucine 313, isoleucine 351 to phenylalanine 371, valine 383 to leucine 403, proline 408 to alanine 428, and isoleucine 433 to threonine 453.

The protein belongs to the HAK/KUP transporter (TC 2.A.72) family.

Its subcellular location is the cell inner membrane. The enzyme catalyses K(+)(in) + H(+)(in) = K(+)(out) + H(+)(out). Transport of potassium into the cell. Likely operates as a K(+):H(+) symporter. In Pseudomonas entomophila (strain L48), this protein is Probable potassium transport system protein Kup.